A 207-amino-acid chain; its full sequence is Hemin/hemoglobin-binding protein 1 (207 aa).

The signal sequence occupies residues 1 to 27 (MKKVLVFAAFIVLFSFSFLSTGLTAQA). The 120-residue stretch at 29-148 (LKDGTYSVDY…RFDEGSAKAL (120 aa)) folds into the NEAT domain. Residues 151 to 178 (AVKSSDNNTTTPATKSDSSNKVTNPKSS) are disordered. Over residues 154 to 178 (SSDNNTTTPATKSDSSNKVTNPKSS) the composition is skewed to polar residues. Positions 174–178 (NPKSS) match the NPKXZ sorting signal motif. Ser-177 is subject to Murein peptidoglycan amidated serine. A propeptide spans 178–207 (SDSSQMFLYGIIFVATGAGLILLKRRAIFK) (removed by sortase B).

Its subcellular location is the secreted. The protein resides in the cell wall. Functionally, binds both host hemin and hemoglobin with affinity in the nanomolar range and presumably directs it to membrane transporters. This chain is Hemin/hemoglobin-binding protein 1, found in Listeria monocytogenes serovar 1/2a (strain ATCC BAA-679 / EGD-e).